Reading from the N-terminus, the 599-residue chain is Phosphomethylpyrimidine synthase (599 aa).

Polar residues predominate over residues 1-16 (MSAASANSVTNPSAWE). 2 disordered regions span residues 1-53 (MSAA…PNDP) and 82-108 (EDTEEYAGRERNLADDGRSAQRRGAAS). Positions 87–100 (YAGRERNLADDGRS) are enriched in basic and acidic residues. Substrate is bound by residues asparagine 192, methionine 221, tyrosine 250, histidine 286, 306-308 (SRG), 347-350 (DGLR), and glutamate 386. Histidine 390 is a Zn(2+) binding site. Tyrosine 413 provides a ligand contact to substrate. Histidine 454 provides a ligand contact to Zn(2+). Cysteine 534, cysteine 537, and cysteine 542 together coordinate [4Fe-4S] cluster.

Belongs to the ThiC family. [4Fe-4S] cluster serves as cofactor.

It catalyses the reaction 5-amino-1-(5-phospho-beta-D-ribosyl)imidazole + S-adenosyl-L-methionine = 4-amino-2-methyl-5-(phosphooxymethyl)pyrimidine + CO + 5'-deoxyadenosine + formate + L-methionine + 3 H(+). It participates in cofactor biosynthesis; thiamine diphosphate biosynthesis. In terms of biological role, catalyzes the synthesis of the hydroxymethylpyrimidine phosphate (HMP-P) moiety of thiamine from aminoimidazole ribotide (AIR) in a radical S-adenosyl-L-methionine (SAM)-dependent reaction. The chain is Phosphomethylpyrimidine synthase from Corynebacterium diphtheriae (strain ATCC 700971 / NCTC 13129 / Biotype gravis).